Consider the following 124-residue polypeptide: Small ribosomal subunit protein uS13 (124 aa).

Positions arginine 94–arginine 124 are disordered.

This sequence belongs to the universal ribosomal protein uS13 family. As to quaternary structure, part of the 30S ribosomal subunit. Forms a loose heterodimer with protein S19. Forms two bridges to the 50S subunit in the 70S ribosome.

Located at the top of the head of the 30S subunit, it contacts several helices of the 16S rRNA. In the 70S ribosome it contacts the 23S rRNA (bridge B1a) and protein L5 of the 50S subunit (bridge B1b), connecting the 2 subunits; these bridges are implicated in subunit movement. Contacts the tRNAs in the A and P-sites. The protein is Small ribosomal subunit protein uS13 of Mycobacterium tuberculosis (strain ATCC 25177 / H37Ra).